The primary structure comprises 389 residues: Probable nitrate transporter NarT (389 aa).

Helical transmembrane passes span 14–34, 45–65, 69–89, 97–117, 139–159, 161–181, 211–231, 246–266, 268–288, 294–314, 331–351, and 353–373; these read TLSL…MPFI, ISII…PFGY, IVGA…PIFF, GMLM…SVGV, GNIG…IIGW, TTVR…FIFG, WYFI…NYLV, GVFI…GDKF, AVKV…ILGI, LFTV…GLIF, IVSM…TYVA, and LTGS…IALF.

Belongs to the major facilitator superfamily. Nitrate/nitrite porter (TC 2.A.1.8) family.

The protein localises to the cell membrane. Its function is as follows. Probably required for nitrate uptake under anoxic conditions. Also possibly involved in excretion of nitrite produced by the dissimilatory reduction of nitrate. The protein is Probable nitrate transporter NarT (narT) of Staphylococcus aureus (strain USA300).